Reading from the N-terminus, the 83-residue chain is Putative potassium channel toxin Ts20 (83 aa).

A signal peptide spans 1–18 (MKLDIVLIMFVTFSTTLA).

Contains 3 disulfide bonds. As to expression, expressed by the venom gland.

It localises to the secreted. Functionally, reversibly inhibits potassium channels. This chain is Putative potassium channel toxin Ts20, found in Tityus serrulatus (Brazilian scorpion).